Reading from the N-terminus, the 271-residue chain is 2-dehydro-3-deoxyphosphooctonate aldolase (271 aa).

This sequence belongs to the KdsA family.

The protein localises to the cytoplasm. It carries out the reaction D-arabinose 5-phosphate + phosphoenolpyruvate + H2O = 3-deoxy-alpha-D-manno-2-octulosonate-8-phosphate + phosphate. It participates in carbohydrate biosynthesis; 3-deoxy-D-manno-octulosonate biosynthesis; 3-deoxy-D-manno-octulosonate from D-ribulose 5-phosphate: step 2/3. Its pathway is bacterial outer membrane biogenesis; lipopolysaccharide biosynthesis. The chain is 2-dehydro-3-deoxyphosphooctonate aldolase from Campylobacter jejuni subsp. jejuni serotype O:6 (strain 81116 / NCTC 11828).